The primary structure comprises 247 residues: tRNA uridine(34) hydroxylase (247 aa).

The Rhodanese domain occupies threonine 124 to asparagine 218. Cysteine 178 (cysteine persulfide intermediate) is an active-site residue.

This sequence belongs to the TrhO family.

It catalyses the reaction uridine(34) in tRNA + AH2 + O2 = 5-hydroxyuridine(34) in tRNA + A + H2O. Catalyzes oxygen-dependent 5-hydroxyuridine (ho5U) modification at position 34 in tRNAs. The polypeptide is tRNA uridine(34) hydroxylase (Rickettsia conorii (strain ATCC VR-613 / Malish 7)).